Reading from the N-terminus, the 188-residue chain is Putative manganese efflux pump MntP (188 aa).

6 helical membrane passes run 8 to 28 (CLGL…GFVI), 39 to 59 (IALF…LTGL), 68 to 88 (IDHW…IYEA), 106 to 126 (LLAL…GLSL), 131 to 151 (ILLP…IGVF), and 164 to 184 (IEII…IEDL).

It belongs to the MntP (TC 9.B.29) family.

It is found in the cell inner membrane. In terms of biological role, probably functions as a manganese efflux pump. This chain is Putative manganese efflux pump MntP, found in Crocosphaera subtropica (strain ATCC 51142 / BH68) (Cyanothece sp. (strain ATCC 51142)).